We begin with the raw amino-acid sequence, 273 residues long: MAVVKCKPTSPGRRHVVKVVNPELHKGKPFAPLLEKNSKSGGRNNNGRITTRHIGGGHKQAYRIVDFKRNKDGIPAVVERLEYDPNRSANIALVLYKDGERRYILAPKGLKAGDQIQSGVDAAIKPGNTLPMRNIPVGSTVHNVEMKPGKGGQLARSAGTYVQIVARDGAYVTLRLRSGEMRKVEADCRATLGEVGNAEHMLRVLGKAGAARWRGVRPTVRGTAMNPVDHPHGGGEGRNFGKHPVTPWGVQTKGKKTRSNKRTDKFIVRRRSK.

2 disordered regions span residues 28 to 53 and 221 to 273; these read KPFAPLLEKNSKSGGRNNNGRITTRH and RGTA…RRSK. The segment covering 39–48 has biased composition (low complexity); the sequence is KSGGRNNNGR. Residue K242 is modified to N6-acetyllysine.

It belongs to the universal ribosomal protein uL2 family. In terms of assembly, part of the 50S ribosomal subunit. Forms a bridge to the 30S subunit in the 70S ribosome.

Its function is as follows. One of the primary rRNA binding proteins. Required for association of the 30S and 50S subunits to form the 70S ribosome, for tRNA binding and peptide bond formation. It has been suggested to have peptidyltransferase activity; this is somewhat controversial. Makes several contacts with the 16S rRNA in the 70S ribosome. This is Large ribosomal subunit protein uL2 from Escherichia coli (strain SE11).